We begin with the raw amino-acid sequence, 451 residues long: Aspartate aminotransferase, mitochondrial (451 aa).

Glycine 52, tryptophan 155, and asparagine 216 together coordinate L-aspartate. Position 286 is an N6-(pyridoxal phosphate)lysine (lysine 286). Arginine 423 is a binding site for L-aspartate.

It belongs to the class-I pyridoxal-phosphate-dependent aminotransferase family. As to quaternary structure, homodimer. Requires pyridoxal 5'-phosphate as cofactor.

It localises to the mitochondrion matrix. The enzyme catalyses L-aspartate + 2-oxoglutarate = oxaloacetate + L-glutamate. In terms of biological role, plays a key role in amino acid metabolism. Important for metabolite exchange between mitochondria and cytosol. The chain is Aspartate aminotransferase, mitochondrial (AAT1) from Saccharomyces cerevisiae (strain ATCC 204508 / S288c) (Baker's yeast).